The following is a 524-amino-acid chain: Na(+)/H(+) antiporter NhaB (524 aa).

The next 9 membrane-spanning stretches (helical) occupy residues 13 to 33 (FLGN…IINP), 98 to 118 (LLLV…LFVF), 140 to 160 (AFLS…SVSV), 239 to 259 (FFIR…LVCL), 304 to 324 (AIIG…VGLV), 325 to 345 (GLSV…HSLG), 358 to 378 (LTVF…TPII), 448 to 468 (ATPN…APLI), and 479 to 499 (ALPY…FLLV).

Belongs to the NhaB Na(+)/H(+) (TC 2.A.34) antiporter family.

The protein resides in the cell inner membrane. It carries out the reaction 2 Na(+)(in) + 3 H(+)(out) = 2 Na(+)(out) + 3 H(+)(in). In terms of biological role, na(+)/H(+) antiporter that extrudes sodium in exchange for external protons. The protein is Na(+)/H(+) antiporter NhaB of Yersinia pseudotuberculosis serotype I (strain IP32953).